Reading from the N-terminus, the 693-residue chain is Elongation factor G (693 aa).

The tr-type G domain maps to Glu8 to Leu282. GTP contacts are provided by residues Ala17–Thr24, Asp81–His85, and Asn135–Asp138.

It belongs to the TRAFAC class translation factor GTPase superfamily. Classic translation factor GTPase family. EF-G/EF-2 subfamily.

It localises to the cytoplasm. Its function is as follows. Catalyzes the GTP-dependent ribosomal translocation step during translation elongation. During this step, the ribosome changes from the pre-translocational (PRE) to the post-translocational (POST) state as the newly formed A-site-bound peptidyl-tRNA and P-site-bound deacylated tRNA move to the P and E sites, respectively. Catalyzes the coordinated movement of the two tRNA molecules, the mRNA and conformational changes in the ribosome. The sequence is that of Elongation factor G from Staphylococcus aureus (strain Newman).